The sequence spans 469 residues: 3-isopropylmalate dehydratase large subunit (469 aa).

Positions 347, 410, and 413 each coordinate [4Fe-4S] cluster.

It belongs to the aconitase/IPM isomerase family. LeuC type 1 subfamily. In terms of assembly, heterodimer of LeuC and LeuD. Requires [4Fe-4S] cluster as cofactor.

The enzyme catalyses (2R,3S)-3-isopropylmalate = (2S)-2-isopropylmalate. It functions in the pathway amino-acid biosynthesis; L-leucine biosynthesis; L-leucine from 3-methyl-2-oxobutanoate: step 2/4. In terms of biological role, catalyzes the isomerization between 2-isopropylmalate and 3-isopropylmalate, via the formation of 2-isopropylmaleate. The chain is 3-isopropylmalate dehydratase large subunit from Polynucleobacter necessarius subsp. necessarius (strain STIR1).